We begin with the raw amino-acid sequence, 250 residues long: Tripartite motif-containing protein 74 (250 aa).

The RING-type zinc-finger motif lies at C16–W57. The B box-type zinc-finger motif lies at P84–V125. The Zn(2+) site is built by C89, H92, C111, and H117. 2 coiled-coil regions span residues V125–D169 and L204–E235.

It belongs to the TRIM/RBCC family.

The protein is Tripartite motif-containing protein 74 (TRIM74) of Homo sapiens (Human).